Here is a 306-residue protein sequence, read N- to C-terminus: Large ribosomal subunit protein mL45 (306 aa).

A disordered region spans residues 287 to 306 (LKPEEEYEEAQGEAQKPQLA).

The protein belongs to the mitochondrion-specific ribosomal protein mL45 family. Component of the mitochondrial large ribosomal subunit (mt-LSU). Mature mammalian 55S mitochondrial ribosomes consist of a small (28S) and a large (39S) subunit. The 28S small subunit contains a 12S ribosomal RNA (12S mt-rRNA) and 30 different proteins. The 39S large subunit contains a 16S rRNA (16S mt-rRNA), a copy of mitochondrial valine transfer RNA (mt-tRNA(Val)), which plays an integral structural role, and 52 different proteins.

It is found in the mitochondrion. Component of the mitochondrial large ribosomal subunit (mt-LSU). Within the mitochondrial ribosomes, required to direct the nascent polypeptide toward the tunnel exit and position the exit at a distance from the membrane surface. This is Large ribosomal subunit protein mL45 from Homo sapiens (Human).